A 378-amino-acid chain; its full sequence is Beta-1,3-galactosyltransferase 4 (378 aa).

The Cytoplasmic segment spans residues 1-8; the sequence is MQLRLFRR. A helical; Signal-anchor for type II membrane protein membrane pass occupies residues 9–19; that stretch reads LLLAALLLVIV. The Lumenal segment spans residues 20-378; sequence WTLFGPSGLG…RCRAIAWLQS (359 aa). The N-linked (GlcNAc...) asparagine glycan is linked to Asn149.

It belongs to the glycosyltransferase 31 family. As to expression, highly expressed in heart, skeletal muscle and pancreas and, to a lesser extent, in brain, placenta, kidney, liver and lung.

The protein localises to the golgi apparatus membrane. It carries out the reaction a ganglioside GM2 (d18:1(4E)) + UDP-alpha-D-galactose = a ganglioside GM1 (d18:1(4E)) + UDP + H(+). The catalysed reaction is a ganglioside GM2 + UDP-alpha-D-galactose = a ganglioside GM1 + UDP + H(+). It catalyses the reaction a ganglioside GD2 (d18:1(4E)) + UDP-alpha-D-galactose = a ganglioside GD1b (d18:1(4E)) + UDP + H(+). The enzyme catalyses a ganglioside GA2 (d18:1(4E)) + UDP-alpha-D-galactose = a ganglioside GA1 (d18:1(4E)) + UDP + H(+). It participates in protein modification; protein glycosylation. In terms of biological role, involved in GM1/GD1B/GA1 ganglioside biosynthesis. The chain is Beta-1,3-galactosyltransferase 4 from Homo sapiens (Human).